The sequence spans 514 residues: 2-isopropylmalate synthase (514 aa).

The Pyruvate carboxyltransferase domain maps to 5-268; that stretch reads LIIFDTTLRD…DVGIDTSQIV (264 aa). Mn(2+)-binding residues include aspartate 14, histidine 202, histidine 204, and asparagine 239. Residues 395–514 are regulatory domain; sequence KFVSLSQRSE…KDDKVNPQRS (120 aa).

The protein belongs to the alpha-IPM synthase/homocitrate synthase family. LeuA type 1 subfamily. In terms of assembly, homodimer. It depends on Mn(2+) as a cofactor.

Its subcellular location is the cytoplasm. The enzyme catalyses 3-methyl-2-oxobutanoate + acetyl-CoA + H2O = (2S)-2-isopropylmalate + CoA + H(+). Its pathway is amino-acid biosynthesis; L-leucine biosynthesis; L-leucine from 3-methyl-2-oxobutanoate: step 1/4. Catalyzes the condensation of the acetyl group of acetyl-CoA with 3-methyl-2-oxobutanoate (2-ketoisovalerate) to form 3-carboxy-3-hydroxy-4-methylpentanoate (2-isopropylmalate). The chain is 2-isopropylmalate synthase from Burkholderia cenocepacia (strain ATCC BAA-245 / DSM 16553 / LMG 16656 / NCTC 13227 / J2315 / CF5610) (Burkholderia cepacia (strain J2315)).